Consider the following 473-residue polypeptide: ATP synthase subunit beta (473 aa).

153–160 (GGAGVGKT) serves as a coordination point for ATP.

Belongs to the ATPase alpha/beta chains family. As to quaternary structure, F-type ATPases have 2 components, CF(1) - the catalytic core - and CF(0) - the membrane proton channel. CF(1) has five subunits: alpha(3), beta(3), gamma(1), delta(1), epsilon(1). CF(0) has three main subunits: a(1), b(2) and c(9-12). The alpha and beta chains form an alternating ring which encloses part of the gamma chain. CF(1) is attached to CF(0) by a central stalk formed by the gamma and epsilon chains, while a peripheral stalk is formed by the delta and b chains.

It localises to the cell inner membrane. The catalysed reaction is ATP + H2O + 4 H(+)(in) = ADP + phosphate + 5 H(+)(out). In terms of biological role, produces ATP from ADP in the presence of a proton gradient across the membrane. The catalytic sites are hosted primarily by the beta subunits. The protein is ATP synthase subunit beta of Rickettsia akari (strain Hartford).